We begin with the raw amino-acid sequence, 162 residues long: Protein A49 (162 aa).

It belongs to the poxviridae A49 protein family.

This is Protein A49 from Homo sapiens (Human).